Here is a 279-residue protein sequence, read N- to C-terminus: NADPH-dependent 7-cyano-7-deazaguanine reductase (279 aa).

86–88 (IES) serves as a coordination point for substrate. NADPH is bound at residue 88–89 (SK). C187 functions as the Thioimide intermediate in the catalytic mechanism. The active-site Proton donor is D194. 226-227 (HE) lines the substrate pocket. Position 255 to 256 (255 to 256 (RG)) interacts with NADPH.

It belongs to the GTP cyclohydrolase I family. QueF type 2 subfamily. As to quaternary structure, homodimer.

The protein localises to the cytoplasm. It catalyses the reaction 7-aminomethyl-7-carbaguanine + 2 NADP(+) = 7-cyano-7-deazaguanine + 2 NADPH + 3 H(+). It functions in the pathway tRNA modification; tRNA-queuosine biosynthesis. Catalyzes the NADPH-dependent reduction of 7-cyano-7-deazaguanine (preQ0) to 7-aminomethyl-7-deazaguanine (preQ1). The protein is NADPH-dependent 7-cyano-7-deazaguanine reductase of Actinobacillus pleuropneumoniae serotype 7 (strain AP76).